The chain runs to 252 residues: Adapter protein MecA (252 aa).

This sequence belongs to the MecA family. In terms of assembly, homodimer.

Enables the recognition and targeting of unfolded and aggregated proteins to the ClpC protease or to other proteins involved in proteolysis. The protein is Adapter protein MecA of Streptococcus uberis (strain ATCC BAA-854 / 0140J).